Here is a 295-residue protein sequence, read N- to C-terminus: Urease accessory protein UreD (295 aa).

This sequence belongs to the UreD family. As to quaternary structure, ureD, UreF and UreG form a complex that acts as a GTP-hydrolysis-dependent molecular chaperone, activating the urease apoprotein by helping to assemble the nickel containing metallocenter of UreC. The UreE protein probably delivers the nickel.

The protein localises to the cytoplasm. Required for maturation of urease via the functional incorporation of the urease nickel metallocenter. The protein is Urease accessory protein UreD of Saccharophagus degradans (strain 2-40 / ATCC 43961 / DSM 17024).